We begin with the raw amino-acid sequence, 365 residues long: MSIEIANIKKSFGRTQVLNDISLDIPSGQMVALLGPSGSGKTTLLRIIAGLEHQTSGHIRFHGTDVSRLHARDRKVGFVFQHYALFRHMTVFDNITFGLTVLPRRERPNAAAIKAKVTKLLEMVQLAHLADRYPAQLSGGQKQRVALARALAVEPQILLLDEPFGALDAQVRKELRRWLRQLHEELKFTSVFVTHDQEEATEVADRVVVMSQGNIEQADAPNQVWREPATRFVLEFMGEVNRLQGTIRGGQFHVGAHRWPLGYTPAYQGPVDLFLRPWEVDISRRTSLDSPLPVQVLEASPKGHYTQLVVQPLGWYNEPLTVVMHGDDAPQHGERLFVGLQHARLYNGDERIETRDEELALAQSA.

Residues 3-237 form the ABC transporter domain; that stretch reads IEIANIKKSF…PATRFVLEFM (235 aa). 35–42 contributes to the ATP binding site; sequence GPSGSGKT.

Belongs to the ABC transporter superfamily. Sulfate/tungstate importer (TC 3.A.1.6) family. In terms of assembly, the complex is composed of two ATP-binding proteins (CysA), two transmembrane proteins (CysT and CysW) and a solute-binding protein (CysP).

The protein localises to the cell inner membrane. The enzyme catalyses sulfate(out) + ATP + H2O = sulfate(in) + ADP + phosphate + H(+). It carries out the reaction thiosulfate(out) + ATP + H2O = thiosulfate(in) + ADP + phosphate + H(+). Part of the ABC transporter complex CysAWTP involved in sulfate/thiosulfate import. Responsible for energy coupling to the transport system. The protein is Sulfate/thiosulfate import ATP-binding protein CysA of Shigella flexneri.